Consider the following 247-residue polypeptide: Coproheme decarboxylase (247 aa).

Residues R129, 143–147, H170, Q183, and S221 contribute to the Fe-coproporphyrin III site; that span reads YPMDK. Y143 is a catalytic residue.

Belongs to the ChdC family. Type 1 subfamily. It depends on Fe-coproporphyrin III as a cofactor.

It catalyses the reaction Fe-coproporphyrin III + 2 H2O2 + 2 H(+) = heme b + 2 CO2 + 4 H2O. The catalysed reaction is Fe-coproporphyrin III + H2O2 + H(+) = harderoheme III + CO2 + 2 H2O. It carries out the reaction harderoheme III + H2O2 + H(+) = heme b + CO2 + 2 H2O. It participates in porphyrin-containing compound metabolism; protoheme biosynthesis. In terms of biological role, involved in coproporphyrin-dependent heme b biosynthesis. Catalyzes the decarboxylation of Fe-coproporphyrin III (coproheme) to heme b (protoheme IX), the last step of the pathway. The reaction occurs in a stepwise manner with a three-propionate intermediate. The sequence is that of Coproheme decarboxylase from Bacillus cereus (strain AH820).